The primary structure comprises 207 residues: Vexin (207 aa).

Residues 56–100 (ELLPHRGDRRDPGDRRRFGRLQTARPPTAHPAKASARPVGISEPK) are disordered. The span at 58-71 (LPHRGDRRDPGDRR) shows a compositional bias: basic and acidic residues.

The protein belongs to the vexin family.

The protein resides in the cell membrane. It is found in the nucleus. Its function is as follows. Required for neurogenesis in the neural plate and retina. Strongly cooperates with neural bHLH factors to promote neurogenesis. The polypeptide is Vexin (Homo sapiens (Human)).